The chain runs to 97 residues: U6-theraphotoxin-Hhn1a 4 (97 aa).

Positions M1–A33 are cleaved as a signal peptide. The propeptide occupies S34 to R61. Cystine bridges form between C63-C77, C70-C82, and C76-C89.

This sequence belongs to the neurotoxin 10 (Hwtx-1) family. 12 (Hntx-12) subfamily. As to expression, expressed by the venom gland.

It localises to the secreted. Functionally, ion channel inhibitor. The polypeptide is U6-theraphotoxin-Hhn1a 4 (Cyriopagopus hainanus (Chinese bird spider)).